A 189-amino-acid chain; its full sequence is TATA-box-binding protein 1 (189 aa).

2 tandem repeats follow at residues Ile10–Leu86 and Val101–Leu179.

This sequence belongs to the TBP family.

Functionally, general factor that plays a role in the activation of archaeal genes transcribed by RNA polymerase. Binds specifically to the TATA box promoter element which lies close to the position of transcription initiation. This chain is TATA-box-binding protein 1 (tbp1), found in Haloferax volcanii (strain ATCC 29605 / DSM 3757 / JCM 8879 / NBRC 14742 / NCIMB 2012 / VKM B-1768 / DS2) (Halobacterium volcanii).